We begin with the raw amino-acid sequence, 234 residues long: MCGNHLKRVAAPRTWPITRKTSKWVAKPMPGAHSEERGMPLVVVLRDLLKVADNTSEIKKILHEGKVLVDGKVRKDYRYTVGMFDTISIPAINANYRVVIGMDGKFHLVPVTDASAKICKIVNKTALRGGKIQLNLHDGTTMIASNDYKTKDSVILKMPERKIDQHFTYAVGSLVMVTEGKHSGEIGKVKEIKVVRSSAPNTVVITTPEGDFETIEQYVFVIGKDSPAVQGVKA.

In terms of domain architecture, S4 RNA-binding spans 39 to 102 (MPLVVVLRDL…NANYRVVIGM (64 aa)).

The protein belongs to the eukaryotic ribosomal protein eS4 family.

This is Small ribosomal subunit protein eS4 from Methanocella arvoryzae (strain DSM 22066 / NBRC 105507 / MRE50).